A 581-amino-acid polypeptide reads, in one-letter code: MFLKYILASGICLVSLLSSTNAAPRHLYVKRYPVIYNASNITEVSNSTTVPPPPFVNTTAPNGTCLGNYNEYLPSGYYNATDRPKIHFTPSSGFMNDPNGLVYTGGVYHMFFQYSPKTLTAGEVHWGHTVSKDLIHWENYPIAIYPDEHENGVLSLPFSGSAVVDVHNSSGLFSNDTIPEERIVLIYTDHWTGVAERQAIAYTTDGGYTFKKYSGNPVLDINSLQFRDPKVIWDFDANRWVMIVAMSQNYGIAFYSSYDLIHWTELSVFSTSGYLGLQYECPGMARVPVEGTDEYKWVLFISINPGAPLGGSVVQYFVGDWNGTNFVPDDGQTRFVDLGKDFYASALYHSSSANADVIGVGWASNWQYTNQAPTQVFRSAMTVARKFTLRDVPQNPMTNLTSLIQTPLNVSLLRDETLFTAPVINSSSSLSGSPITLPSNTAFEFNVTLSINYTEGCTTGYCLGRIIIDSDDPYRLQSISVDVDFAASTLVINRAKAQMGWFNSLFTPSFANDIYIYGNVTLYGIVDNGLLELYVNNGEKTYTNDFFFLQGATPGQISFAAFQGVSFNNVTVTPLKTIWNC.

The first 22 residues, 1 to 22 (MFLKYILASGICLVSLLSSTNA), serve as a signal peptide directing secretion. N-linked (GlcNAc...) asparagine glycans are attached at residues Asn37, Asn40, Asn46, Asn57, Asn62, and Asn79. Substrate-binding positions include 94–97 (FMND), Gln113, and 158–159 (FS). Residue Asp97 is part of the active site. 2 N-linked (GlcNAc...) asparagine glycosylation sites follow: Asn168 and Asn175. Substrate contacts are provided by residues 227 to 228 (RD) and Glu280. Residue Asn322 is glycosylated (N-linked (GlcNAc...) asparagine). Trp366 is a binding site for substrate. 7 N-linked (GlcNAc...) asparagine glycosylation sites follow: Asn399, Asn409, Asn425, Asn446, Asn452, Asn519, and Asn569.

This sequence belongs to the glycosyl hydrolase 32 family. Post-translationally, glycosylated; contains 67% carbohydrates. This is composed of equimolar amounts of mannose and galactose. There is also a small amount of glucosamine present.

It carries out the reaction Hydrolysis of terminal non-reducing beta-D-fructofuranoside residues in beta-D-fructofuranosides.. The sequence is that of Invertase (inv1) from Schizosaccharomyces pombe (strain 972 / ATCC 24843) (Fission yeast).